The sequence spans 140 residues: MNLEALCKEAGLSFYDDELVSENGRKIYRIYVQKEGGVNLDDCARLSEILSPIFDVEPPVNGEYFLEVSSPGLERKLSKIEHFAKSIGELVKITTNEKEKFEAKIIAVDDENITLENLENKEKTTINFNDIKKARTFVEW.

The protein belongs to the RimP family.

It is found in the cytoplasm. Functionally, required for maturation of 30S ribosomal subunits. The sequence is that of Ribosome maturation factor RimP from Campylobacter jejuni subsp. jejuni serotype O:6 (strain 81116 / NCTC 11828).